The primary structure comprises 180 residues: Isopentenyl-diphosphate Delta-isomerase (180 aa).

Mn(2+) is bound by residues His-29 and His-36. The active site involves Cys-71. His-73 contributes to the Mn(2+) binding site. Glu-91 contributes to the Mg(2+) binding site. The Mn(2+) site is built by Glu-118 and Glu-120. Glu-120 is an active-site residue.

This sequence belongs to the IPP isomerase type 1 family. The cofactor is Mg(2+). Mn(2+) is required as a cofactor.

It is found in the cytoplasm. The enzyme catalyses isopentenyl diphosphate = dimethylallyl diphosphate. Its pathway is isoprenoid biosynthesis; dimethylallyl diphosphate biosynthesis; dimethylallyl diphosphate from isopentenyl diphosphate: step 1/1. Its function is as follows. Catalyzes the 1,3-allylic rearrangement of the homoallylic substrate isopentenyl (IPP) to its highly electrophilic allylic isomer, dimethylallyl diphosphate (DMAPP). This is Isopentenyl-diphosphate Delta-isomerase from Kocuria rhizophila (strain ATCC 9341 / DSM 348 / NBRC 103217 / DC2201).